We begin with the raw amino-acid sequence, 501 residues long: Membrane-bound lytic murein transglycosylase F (501 aa).

The first 29 residues, 1-29 (MTKILLNTASTVLTRLWKLSLLGLVFAVA), serve as a signal peptide directing secretion. The segment at 30–274 (AATLVSSRIP…DAMETFYGHL (245 aa)) is non-LT domain. The tract at residues 275–501 (GEIDYSGAIL…VKSISGTSSL (227 aa)) is LT domain. Glu-321 is an active-site residue.

It in the N-terminal section; belongs to the bacterial solute-binding protein 3 family. The protein in the C-terminal section; belongs to the transglycosylase Slt family.

It is found in the cell outer membrane. It carries out the reaction Exolytic cleavage of the (1-&gt;4)-beta-glycosidic linkage between N-acetylmuramic acid (MurNAc) and N-acetylglucosamine (GlcNAc) residues in peptidoglycan, from either the reducing or the non-reducing ends of the peptidoglycan chains, with concomitant formation of a 1,6-anhydrobond in the MurNAc residue.. Murein-degrading enzyme that degrades murein glycan strands and insoluble, high-molecular weight murein sacculi, with the concomitant formation of a 1,6-anhydromuramoyl product. Lytic transglycosylases (LTs) play an integral role in the metabolism of the peptidoglycan (PG) sacculus. Their lytic action creates space within the PG sacculus to allow for its expansion as well as for the insertion of various structures such as secretion systems and flagella. The chain is Membrane-bound lytic murein transglycosylase F from Saccharophagus degradans (strain 2-40 / ATCC 43961 / DSM 17024).